Here is a 424-residue protein sequence, read N- to C-terminus: CinA-like protein (424 aa).

It belongs to the CinA family.

This chain is CinA-like protein, found in Shewanella baltica (strain OS155 / ATCC BAA-1091).